A 507-amino-acid polypeptide reads, in one-letter code: Histidine ammonia-lyase (507 aa).

The segment at residues 141–143 (ASG) is a cross-link (5-imidazolinone (Ala-Gly)). Ser142 carries the 2,3-didehydroalanine (Ser) modification.

Belongs to the PAL/histidase family. In terms of processing, contains an active site 4-methylidene-imidazol-5-one (MIO), which is formed autocatalytically by cyclization and dehydration of residues Ala-Ser-Gly.

It is found in the cytoplasm. The enzyme catalyses L-histidine = trans-urocanate + NH4(+). It functions in the pathway amino-acid degradation; L-histidine degradation into L-glutamate; N-formimidoyl-L-glutamate from L-histidine: step 1/3. This Burkholderia lata (strain ATCC 17760 / DSM 23089 / LMG 22485 / NCIMB 9086 / R18194 / 383) protein is Histidine ammonia-lyase.